Consider the following 254-residue polypeptide: Capsid protein (254 aa).

Residues 1–12 (MRKYTRNTYTMS) show a composition bias toward polar residues. The disordered stretch occupies residues 1 to 38 (MRKYTRNTYTMSQKRKVNPQSAWPKKRRTSTTSRKYQW). The Bipartite nuclear localization signal signature appears at 10-35 (TMSQKRKVNPQSAWPKKRRTSTTSRK).

It belongs to the geminiviridae capsid protein family. As to quaternary structure, homomultimer. Binds to single-stranded and double-stranded viral DNA. Interacts (via nuclear localization signal) with host importin alpha-1a.

It is found in the virion. The protein localises to the host nucleus. Its function is as follows. Encapsidates the viral genome into characteristic twinned ('geminate') particles. Binds the genomic viral ssDNA and shuttles it into and out of the cell nucleus. Plays a role in protection of the genome from degradation, virus acquisition and transmission by insect vectors, infectivity, and systemic movement. The CP of monopartite geminiviruses is absolutely essential for virus movement. The polypeptide is Capsid protein (Beet curly top virus (strain California/Logan) (BCTV)).